A 463-amino-acid polypeptide reads, in one-letter code: Golgi-associated PDZ and coiled-coil motif-containing protein (463 aa).

An N-acetylserine modification is found at Ser-2. A coiled-coil region spans residues 85 to 201 (AQTVSQINHK…RHIAVLQAEV (117 aa)). Residues 289–372 (KVLLLKEDHE…EIEFEVVYVA (84 aa)) enclose the PDZ domain. Phosphoserine is present on residues Ser-402 and Ser-405.

As to quaternary structure, homooligomer. Interacts with FZD5. Interacts with FZD8. Interacts with GRID2 and BECN1. Interacts with CSPG5. Interacts with CLCN3. Interacts with STX6. Interacts with CFTR. Interacts with ASIC3. Interacts with GOLGA3. Interacts with NLGN1. Interacts with RHOQ. Interacts with MARCHF2; the interaction leads to CFTR ubiquitination and degradation. May interact with CACNG2. Interacts with CCDC62. Ubiquitously expressed (at protein level). Expressed in dorsal root glanglion (DRG), spinal cord and brain. Isoform 1 is preferentially expressed in whole brain (at protein level) and cerebellum. Expressed in spermatocytes and spermatides but not in Sertoli cells and spermatogonia.

It is found in the cytoplasm. Its subcellular location is the golgi apparatus membrane. The protein resides in the golgi apparatus. The protein localises to the trans-Golgi network membrane. It localises to the synapse. It is found in the postsynaptic density. Its subcellular location is the cell projection. The protein resides in the dendrite. Plays a role in intracellular protein trafficking and degradation. May regulate CFTR chloride currents and acid-induced ASIC3 currents by modulating cell surface expression of both channels. May also regulate the intracellular trafficking of the ADR1B receptor. May play a role in autophagy. Together with MARCHF2 mediates the ubiquitination and lysosomal degradation of CFTR. Overexpression results in CFTR intracellular retention and degradation in the lysosomes. The protein is Golgi-associated PDZ and coiled-coil motif-containing protein of Mus musculus (Mouse).